The primary structure comprises 249 residues: Pleckstrin homology domain-containing family F member 2 (249 aa).

Residues 35 to 131 (VLIGEGVLTK…WMNHINKCVS (97 aa)) enclose the PH domain. The FYVE-type zinc finger occupies 152–212 (DSEATVCMRC…ICDSCYDLLS (61 aa)). Residues Cys-158, Cys-161, Cys-175, Cys-178, Cys-183, Cys-186, Cys-204, and Cys-207 each contribute to the Zn(2+) site. The span at 219 to 232 (CQSTRSDSYSQSPK) shows a compositional bias: polar residues. Positions 219 to 249 (CQSTRSDSYSQSPKSSLNDASDDDDDEDSSD) are disordered. Residues 238-249 (ASDDDDDEDSSD) are compositionally biased toward acidic residues.

The protein localises to the early endosome membrane. It is found in the endoplasmic reticulum. May play a role in early endosome fusion upstream of RAB5, hence regulating receptor trafficking and fluid-phase transport. Enhances cellular sensitivity to TNF-induced apoptosis. This Gallus gallus (Chicken) protein is Pleckstrin homology domain-containing family F member 2 (PLEKHF2).